We begin with the raw amino-acid sequence, 1198 residues long: MTPEGTGLQFVSPFAFEAMQKVDVVRLASLSDPELRLLLPCLVRMALCAPADQSQSWAQDKKLILRLLSGVEAVNSIVALLSVDFHALEQDASKEQQLRHKLGGGSGESILVSQLQHGLTLEFEHSDSPRRLRLVLSELLAIMNKVSECNGEFFFKSSELFESAVYLEEAADVLCILQAELPSLLPIVDVAEALLRVRNGAWFLCLLVANVPDSFNEVCRGLIKNGERQDEESLGGRRRTDALRFLCRMNPSQALKVRGMVVEECHLPGLGVALTLDHTKTEACEDGVSDLVCFVSGLLLGTNAKVRTWFGTFIRNGQQRKRETSGSVLWQMRRQLLLELMGILPTVRSTRIVEEADVEMEPTVSVYSGLKEEHVVKASALLRLYCALMGIAGLKPTEEEAEQLLQLMTSRPPATPAGVRFVSLSFCMLLAFSTLVSTPEQEQLMVLWLSWMIKEEAYFESTSGVSASFGEMLLLVAMYFHSNQLSAIIDLVCSTLGMKIVIKPSSLSRMKTIFTQEIFTEQVVTAHAVRVPVTSNLSANITGFLPIHCIYQLLRSRSFTKHKVSIKDWIYRQLCETSTPLHPQLLPLIDVYINSILTPASKSNPEATNQPVTEQEILNLFQEVIGGDSVRLTQRFSITAQLLVLYYILSYEEALLANTKTLASMQRKPKSYSSSLMDQIPIKFLIRQAQGLQQELGGLHSALLRLLATNYPHLCIVDDWICEEEITGTDALLRRMLLTSNAKTHSPKQLQEAFSAVPVSHTQVMQIMEHLTLLSASELIPYAEVLTSNMNQLLNSGVPRRILQTVNKLWMVLNTVMPRRLWVMTVNALQPSIKFIRQQKYTQNDLMIDPLIVLRCDRRVHRCPPLMDVTLHMLNGYLLASKAYLSAHLKETAEQDRPSPNNTVGLVGQTDAPEVTREELKNALLAAQDSAAVQILLEICLPTEEEKAKGANSDISLRNTQGVTTISTPSKETEEGEDNLLCNLREVQCLICCLLHQMYIADPNIAKLVHFQGYPCELLPLTVAGIPSMHICLDFIPELIAQPELEKQIFAIQLLSHLCIQYALPKSLSVARLAVNVMGTLLTVLTQAKRYSFFMPTLPSLVSFCRAFPPLYEDIMSLLIQIGQVCASDVATQTRDIDPIITRLQQIKEKPSGWSQICKDPSYKNGSRDTGSMDPDVQLCHCIESTIIEIINMSVSGI.

A helical membrane pass occupies residues 421–437 (FVSLSFCMLLAFSTLVS).

The protein belongs to the Integrator subunit 2 family. In terms of assembly, component of the Integrator complex, composed of core subunits INTS1, INTS2, INTS3, INTS4, INTS5, INTS6, INTS7, INTS8, INTS9/RC74, INTS10, INTS11/CPSF3L, INTS12, INTS13, INTS14 and INTS15. The core complex associates with protein phosphatase 2A subunits PPP2CA and PPP2R1A, to form the Integrator-PP2A (INTAC) complex.

It is found in the nucleus. It localises to the nucleus membrane. Its subcellular location is the cytoplasm. Component of the integrator complex, a multiprotein complex that terminates RNA polymerase II (Pol II) transcription in the promoter-proximal region of genes. The integrator complex provides a quality checkpoint during transcription elongation by driving premature transcription termination of transcripts that are unfavorably configured for transcriptional elongation: the complex terminates transcription by (1) catalyzing dephosphorylation of the C-terminal domain (CTD) of Pol II subunit POLR2A/RPB1 and SUPT5H/SPT5, (2) degrading the exiting nascent RNA transcript via endonuclease activity and (3) promoting the release of Pol II from bound DNA. The integrator complex is also involved in terminating the synthesis of non-coding Pol II transcripts, such as enhancer RNAs (eRNAs), small nuclear RNAs (snRNAs), telomerase RNAs and long non-coding RNAs (lncRNAs). Mediates recruitment of cytoplasmic dynein to the nuclear envelope, probably as component of the integrator complex. This Mus musculus (Mouse) protein is Integrator complex subunit 2 (Ints2).